We begin with the raw amino-acid sequence, 117 residues long: MEVGDKIHNTNEQITALEKKKYQIETTLLEKQRDLLKLETQQNKAKLELLFELSEVLTQLEGEEWVSATIALRIIKRNKRKYLDLFDLNDDKAYVNKDKFKFLHDEFFELKQQLNDI.

Residues 5-50 (DKIHNTNEQITALEKKKYQIETTLLEKQRDLLKLETQQNKAKLELL) adopt a coiled-coil conformation.

This is an uncharacterized protein from Bacillus pumilus (Bacillus mesentericus).